The sequence spans 801 residues: Bromodomain-containing protein 2 (801 aa).

M1 carries the post-translational modification N-acetylmethionine. The residue at position 6 (T6) is a Phosphothreonine. A Phosphoserine modification is found at S37. Residues 53–73 (ALQLTPANPPPPEVSNPKKPG) are disordered. Positions 74 to 180 (RVTNQLQYLH…KIFLQKVASM (107 aa)) constitute a Bromo 1 domain. Residues D112, Y155, N156, K157, D160, and D161 each contribute to the a protein site. Disordered stretches follow at residues 268-349 (PPAQ…LSEQ), 456-647 (EPLE…YDEK), and 737-801 (EKRL…SDSG). Residues 285 to 298 (TTTPTPTAILAPGS) show a composition bias toward low complexity. Phosphoserine occurs at positions 298, 301, and 305. The segment covering 316–332 (MRRESGRPIKPPRKDLP) has biased composition (basic and acidic residues). In terms of domain architecture, Bromo 2 spans 344 to 453 (GKLSEQLKHC…DVFEFRYAKM (110 aa)). Residues 481–514 (SSEESSSESSSEEEEEEDEEDEEEEESESSDSEE) show a composition bias toward acidic residues. Positions 544–566 (KPKRKREKKEKKKKRKAEKHRGR) are enriched in basic residues. A Nuclear localization signal motif is present at residues 555-559 (KKKRK). The segment covering 592 to 612 (GSGGGSAALGPSGFGPSGGSG) has biased composition (gly residues). The NET domain maps to 632–714 (DSEEEEESRP…SCLRKKPRKP (83 aa)). Residue S633 is modified to Phosphoserine. The span at 763 to 795 (SSSAQQVAVSRLSASSSSSDSSSSSSSSSSSDT) shows a compositional bias: low complexity.

Belongs to the BET family. As to quaternary structure, homodimer. Interacts with E2F1. Interacts with (acetylated) STAT3; promoting STAT3 recruitment to chromatin. Interacts with CTCF; promoting BRD2 recruitment to chromatin. In terms of assembly, (Microbial infection) Interacts with herpes virus 8 protein LANA1.

The protein resides in the nucleus. It localises to the chromosome. Inhibited by JQ1, a thieno-triazolo-1,4-diazepine derivative, which specifically inhibits members of the BET family (BRD2, BRD3 and BRD4). The first bromo domain is inhibited by GSK778 (iBET-BD1), which specifically inhibits the first bromo domain of members of the BET family (BRD2, BRD3 and BRD4). The second bromo domain is inhibited by ABBV-744, which specifically inhibits the second bromo domain of members of the BET family (BRD2, BRD3 and BRD4). The second bromo domain is inhibited by GSK046 (iBET-BD2), which specifically inhibits the second bromo domain of members of the BET family (BRD2, BRD3 and BRD4). Its function is as follows. Chromatin reader protein that specifically recognizes and binds histone H4 acetylated at 'Lys-5' and 'Lys-12' (H4K5ac and H4K12ac, respectively), thereby controlling gene expression and remodeling chromatin structures. Recruits transcription factors and coactivators to target gene sites, and activates RNA polymerase II machinery for transcriptional elongation. Plays a key role in genome compartmentalization via its association with CTCF and cohesin: recruited to chromatin by CTCF and promotes formation of topologically associating domains (TADs) via its ability to bind acetylated histones, contributing to CTCF boundary formation and enhancer insulation. Also recognizes and binds acetylated non-histone proteins, such as STAT3. Involved in inflammatory response by regulating differentiation of naive CD4(+) T-cells into T-helper Th17: recognizes and binds STAT3 acetylated at 'Lys-87', promoting STAT3 recruitment to chromatin. In addition to acetylated lysines, also recognizes and binds lysine residues on histones that are both methylated and acetylated on the same side chain to form N6-acetyl-N6-methyllysine (Kacme), an epigenetic mark of active chromatin associated with increased transcriptional initiation. Specifically binds histone H4 acetyl-methylated at 'Lys-5' and 'Lys-12' (H4K5acme and H4K12acme, respectively). The protein is Bromodomain-containing protein 2 of Homo sapiens (Human).